Reading from the N-terminus, the 658-residue chain is Threonine--tRNA ligase (658 aa).

The TGS domain maps to 1 to 64 (MSNTVSLQFP…GASGKVEIIT (64 aa)). The tract at residues 246-548 (DHRRLGREMD…LIENFAGHMP (303 aa)) is catalytic. Zn(2+) contacts are provided by cysteine 343, histidine 394, and histidine 525.

The protein belongs to the class-II aminoacyl-tRNA synthetase family. As to quaternary structure, homodimer. Zn(2+) serves as cofactor.

It localises to the cytoplasm. It carries out the reaction tRNA(Thr) + L-threonine + ATP = L-threonyl-tRNA(Thr) + AMP + diphosphate + H(+). Its function is as follows. Catalyzes the attachment of threonine to tRNA(Thr) in a two-step reaction: L-threonine is first activated by ATP to form Thr-AMP and then transferred to the acceptor end of tRNA(Thr). Also edits incorrectly charged L-seryl-tRNA(Thr). This is Threonine--tRNA ligase from Brucella canis (strain ATCC 23365 / NCTC 10854 / RM-666).